An 82-amino-acid chain; its full sequence is Immediate early response 3-interacting protein 1 (82 aa).

2 consecutive transmembrane segments (helical) span residues A2–L22 and V62–G82.

It belongs to the YOS1 family.

The protein resides in the endoplasmic reticulum membrane. Regulator of endoplasmic reticulum secretion that acts as a key determinant of brain size. Required for secretion of extracellular matrix proteins. Required for correct brain development by depositing sufficient extracellular matrix proteins for tissue integrity and the proliferation of neural progenitors. Acts as a regulator of the unfolded protein response (UPR). The chain is Immediate early response 3-interacting protein 1 from Bos taurus (Bovine).